The sequence spans 568 residues: Small ribosomal subunit protein bS1 (568 aa).

6 S1 motif domains span residues 27-93 (GYVA…LSRE), 111-177 (GERV…VSRR), 198-266 (GQVV…LGMK), 283-353 (GKKI…LGLK), 370-440 (GTEV…LGIK), and 459-530 (NAVV…LSIK).

This sequence belongs to the bacterial ribosomal protein bS1 family.

Binds mRNA; thus facilitating recognition of the initiation point. It is needed to translate mRNA with a short Shine-Dalgarno (SD) purine-rich sequence. The sequence is that of Small ribosomal subunit protein bS1 (rpsA) from Rhizobium meliloti (strain 1021) (Ensifer meliloti).